The sequence spans 77 residues: Mu-conotoxin BuIIIA (77 aa).

A signal peptide spans 1–22 (MMSKLGVLLTICLLLFPLFALP). Residues 23–51 (QDGDQPADRPAERMQDDISSEQNSLLEKR) constitute a propeptide that is removed on maturation. A disordered region spans residues 26-46 (DQPADRPAERMQDDISSEQNS). The span at 28 to 38 (PADRPAERMQD) shows a compositional bias: basic and acidic residues. Cystine bridges form between C56–C67, C57–C73, and C63–C74. C74 is modified (cysteine amide).

The protein belongs to the conotoxin M superfamily. As to expression, expressed by the venom duct.

It is found in the secreted. Functionally, mu-conotoxins block voltage-gated sodium channels (Nav). This synthetic toxin potently blocks rNav1.2/SCN2A, and rNav1.4/SCN4A. It also moderately blocks rNav1.1/SCN1A, rNav1.3/SCN3A, rNav1.5/SCN5A, and mNav1.6/SCN8A. The inhibition is reversible. The polypeptide is Mu-conotoxin BuIIIA (Conus bullatus (Bubble cone)).